A 298-amino-acid polypeptide reads, in one-letter code: Bifunctional protein FolD (298 aa).

NADP(+) is bound by residues 165–167, Ser190, and Ile231; that span reads GRS.

Belongs to the tetrahydrofolate dehydrogenase/cyclohydrolase family. Homodimer.

It catalyses the reaction (6R)-5,10-methylene-5,6,7,8-tetrahydrofolate + NADP(+) = (6R)-5,10-methenyltetrahydrofolate + NADPH. It carries out the reaction (6R)-5,10-methenyltetrahydrofolate + H2O = (6R)-10-formyltetrahydrofolate + H(+). Its pathway is one-carbon metabolism; tetrahydrofolate interconversion. In terms of biological role, catalyzes the oxidation of 5,10-methylenetetrahydrofolate to 5,10-methenyltetrahydrofolate and then the hydrolysis of 5,10-methenyltetrahydrofolate to 10-formyltetrahydrofolate. The polypeptide is Bifunctional protein FolD (Prochlorococcus marinus (strain MIT 9301)).